The chain runs to 804 residues: Chondroitin sulfate synthase mig-22 (804 aa).

Residues 1–6 (MVGGGR) lie on the Cytoplasmic side of the membrane. A helical; Signal-anchor for type II membrane protein transmembrane segment spans residues 7–27 (TGIHLLLGFLIGAALALFFFS). The Lumenal segment spans residues 28-804 (STPSIDLTSS…QLAKLLFHEK (777 aa)). Residues Asn-123, Asn-172, and Asn-268 are each glycosylated (N-linked (GlcNAc...) asparagine).

Belongs to the chondroitin N-acetylgalactosaminyltransferase family. Interacts with sqv-5. The cofactor is a divalent metal cation. Expressed in seam cells, the vulval epithelium and in oocytes (at protein level).

The protein resides in the golgi apparatus. It is found in the golgi stack membrane. It catalyses the reaction 3-O-(beta-D-GlcA-(1-&gt;3)-beta-D-GalNAc-(1-&gt;4)-beta-D-GlcA-(1-&gt;3)-beta-D-Gal-(1-&gt;3)-beta-D-Gal-(1-&gt;4)-beta-D-Xyl)-L-seryl-[protein] + UDP-N-acetyl-alpha-D-galactosamine = 3-O-(beta-D-GalNAc-(1-&gt;4)-beta-D-GlcA-(1-&gt;3)-beta-D-GalNAc-(1-&gt;4)-beta-D-GlcA-(1-&gt;3)-beta-D-Gal-(1-&gt;3)-beta-D-Gal-(1-&gt;4)-beta-D-Xyl)-L-seryl-[protein] + UDP + H(+). It carries out the reaction 3-O-{beta-D-GlcA-(1-&gt;3)-[beta-D-GalNAc-(1-&gt;4)-beta-D-GlcA-(1-&gt;3)](n)-beta-D-GalNAc-(1-&gt;4)-beta-D-GlcA-(1-&gt;3)-beta-D-Gal-(1-&gt;3)-beta-D-Gal-(1-&gt;4)-beta-D-Xyl}-L-seryl-[protein] + UDP-N-acetyl-alpha-D-galactosamine = 3-O-{[beta-D-GalNAc-(1-&gt;4)-beta-D-GlcA-(1-&gt;3)](n+1)-beta-D-GalNAc-(1-&gt;4)-beta-D-GlcA-(1-&gt;3)-beta-D-Gal-(1-&gt;3)-beta-D-Gal-(1-&gt;4)-beta-D-Xyl}-L-seryl-[protein] + UDP + H(+). The catalysed reaction is 3-O-(beta-D-GalNAc-(1-&gt;4)-beta-D-GlcA-(1-&gt;3)-beta-D-Gal-(1-&gt;3)-beta-D-Gal-(1-&gt;4)-beta-D-Xyl)-L-seryl-[protein] + UDP-alpha-D-glucuronate = 3-O-(beta-D-GlcA-(1-&gt;3)-beta-D-GalNAc-(1-&gt;4)-beta-D-GlcA-(1-&gt;3)-beta-D-Gal-(1-&gt;3)-beta-D-Gal-(1-&gt;4)-beta-D-Xyl)-L-seryl-[protein] + UDP + H(+). The enzyme catalyses 3-O-{[beta-D-GalNAc-(1-&gt;4)-beta-D-GlcA-(1-&gt;3)](n)-beta-D-GalNAc-(1-&gt;4)-beta-D-GlcA-(1-&gt;3)-beta-D-Gal-(1-&gt;3)-beta-D-Gal-(1-&gt;4)-beta-D-Xyl}-L-seryl-[protein] + UDP-alpha-D-glucuronate = 3-O-{beta-D-GlcA-(1-&gt;3)-[beta-D-GalNAc-(1-&gt;4)-beta-D-GlcA-(1-&gt;3)](n)-beta-D-GalNAc-(1-&gt;4)-beta-D-GlcA-(1-&gt;3)-beta-D-Gal-(1-&gt;3)-beta-D-Gal-(1-&gt;4)-beta-D-Xyl}-L-seryl-[protein] + UDP + H(+). Has both beta-1,3-glucuronic acid and beta-1,4-N-acetylgalactosamine transferase activity. Transfers glucuronic acid (GlcUA) from UDP-GlcUA and N-acetylgalactosamine (GalNAc) from UDP-GalNAc to the non-reducing end of the elongating chondroitin polymer. Required together with sqv-5 for the biosynthesis of chondroitin. Chondroitin is involved in organogenesis of the vulva, maturation of the gonad, and neural development. May have a specific role in unc-6/netrin-mediated dorsal guidance of gonadal distal tip cells. Glycosyltransferase activity is weak. This is Chondroitin sulfate synthase mig-22 (mig-22) from Caenorhabditis elegans.